A 118-amino-acid polypeptide reads, in one-letter code: Large ribosomal subunit protein uL18 (118 aa).

The protein belongs to the universal ribosomal protein uL18 family. As to quaternary structure, part of the 50S ribosomal subunit; part of the 5S rRNA/L5/L18/L25 subcomplex. Contacts the 5S and 23S rRNAs.

In terms of biological role, this is one of the proteins that bind and probably mediate the attachment of the 5S RNA into the large ribosomal subunit, where it forms part of the central protuberance. The sequence is that of Large ribosomal subunit protein uL18 from Ralstonia pickettii (strain 12J).